Here is a 471-residue protein sequence, read N- to C-terminus: MTDLPDSTRWQLWIVAFGFFMQSLDTTIVNTALPSMAQSLGESPLHMHMVIVSYVLTVAVMLPASGWLADKVGVRNIFFTAIVLFTLGSLFCALSGTLNELLLARALQGVGGAMMVPVGRLTVMKIVPREQYMAAMTFVTLPGQVGPLLGPALGGLLVEYASWHWIFLINIPVGIIGAIATLLLMPNYTMQTRRFDLSGFLLLAVGMAVLTLALDGSKGTGLSPLTIAGLVAVGVVALVLYLLHARNNNRALFSLKLFRTRTFSLGLAGSFAGRIGSGMLPFMTPVFLQIGLGFSPFHAGLMMIPMVLGSMGMKRIVVQVVNRFGYRRVLVATTLGLSLVTLLFMTTALLGWYYVLPFVLFLQGMVNSTRFSSMNTLTLKDLPDNLASSGNSLLSMIMQLSMSIGVTIAGLLLGLFGSQHVSVDSGTTQTVFMYTWLSMALIIALPAFIFARVPNDTHQNVAISRRKRSAQ.

Residues 1-11 are Periplasmic-facing; that stretch reads MTDLPDSTRWQ. Residues 12 to 32 form a helical membrane-spanning segment; it reads LWIVAFGFFMQSLDTTIVNTA. At 33-48 the chain is on the cytoplasmic side; that stretch reads LPSMAQSLGESPLHMH. Residues 49-69 traverse the membrane as a helical segment; that stretch reads MVIVSYVLTVAVMLPASGWLA. At 70 to 76 the chain is on the periplasmic side; that stretch reads DKVGVRN. Residues 77-97 traverse the membrane as a helical segment; that stretch reads IFFTAIVLFTLGSLFCALSGT. Residues 98–101 lie on the Cytoplasmic side of the membrane; that stretch reads LNEL. The chain crosses the membrane as a helical span at residues 102–124; that stretch reads LLARALQGVGGAMMVPVGRLTVM. At 125–137 the chain is on the periplasmic side; that stretch reads KIVPREQYMAAMT. A helical transmembrane segment spans residues 138–158; sequence FVTLPGQVGPLLGPALGGLLV. Topologically, residues 159 to 164 are cytoplasmic; that stretch reads EYASWH. Residues 165-185 form a helical membrane-spanning segment; the sequence is WIFLINIPVGIIGAIATLLLM. Residues 186 to 196 lie on the Periplasmic side of the membrane; sequence PNYTMQTRRFD. Residues 197–217 traverse the membrane as a helical segment; the sequence is LSGFLLLAVGMAVLTLALDGS. Topologically, residues 218 to 224 are cytoplasmic; that stretch reads KGTGLSP. The chain crosses the membrane as a helical span at residues 225 to 245; sequence LTIAGLVAVGVVALVLYLLHA. The Periplasmic portion of the chain corresponds to 246 to 262; sequence RNNNRALFSLKLFRTRT. A helical membrane pass occupies residues 263–283; sequence FSLGLAGSFAGRIGSGMLPFM. Topologically, residues 284–285 are cytoplasmic; the sequence is TP. The chain crosses the membrane as a helical span at residues 286–306; it reads VFLQIGLGFSPFHAGLMMIPM. Residues 307-341 are Periplasmic-facing; sequence VLGSMGMKRIVVQVVNRFGYRRVLVATTLGLSLVT. A helical transmembrane segment spans residues 342 to 362; sequence LLFMTTALLGWYYVLPFVLFL. Over 363–395 the chain is Cytoplasmic; the sequence is QGMVNSTRFSSMNTLTLKDLPDNLASSGNSLLS. Residues 396–416 traverse the membrane as a helical segment; it reads MIMQLSMSIGVTIAGLLLGLF. Topologically, residues 417–430 are periplasmic; the sequence is GSQHVSVDSGTTQT. The helical transmembrane segment at 431–451 threads the bilayer; it reads VFMYTWLSMALIIALPAFIFA. At 452–471 the chain is on the cytoplasmic side; the sequence is RVPNDTHQNVAISRRKRSAQ.

This sequence belongs to the major facilitator superfamily. TCR/Tet family.

It is found in the cell inner membrane. The polypeptide is Putative multidrug resistance protein MdtD (Escherichia coli (strain K12 / MC4100 / BW2952)).